A 395-amino-acid chain; its full sequence is 3-sulfinopropanoyl-CoA desulfinase (395 aa).

FAD-binding positions include 121-124 (ICIS), serine 130, and 153-156 (YWIT). 243–244 (YN) contacts substrate. FAD-binding positions include arginine 272, glutamine 339, serine 343, 366–370 (GGTAQ), and glutamine 387.

It belongs to the acyl-CoA dehydrogenase family. As to quaternary structure, homotrimer or homotetramer. The cofactor is FAD.

The enzyme catalyses 3-sulfinopropanoyl-CoA + H2O = propanoyl-CoA + sulfite + H(+). In terms of biological role, catalyzes the conversion 3-sulfinopropanoyl-CoA (3SP-CoA) to propanoyl-CoA by abstraction of sulfite. Does not show dehydrogenase activity. This Cupriavidus necator (strain ATCC 43291 / DSM 13513 / CCUG 52238 / LMG 8453 / N-1) (Ralstonia eutropha) protein is 3-sulfinopropanoyl-CoA desulfinase.